We begin with the raw amino-acid sequence, 149 residues long: Calmodulin-2 (149 aa).

Residue Ala-2 is modified to N-acetylalanine. EF-hand domains are found at residues 8–43 (EQIA…LGQN), 44–79 (PTEG…KMKD), 81–116 (DSEE…PGEK), and 117–149 (LTDE…MTSK). The Ca(2+) site is built by Asp-21, Asp-23, Asn-25, Asn-27, Glu-32, Asp-57, Asp-59, Asn-61, Thr-63, Glu-68, Asp-94, Asp-96, Asn-98, and Glu-105. Lys-116 is modified (N6,N6,N6-trimethyllysine). Ca(2+) is bound by residues Asp-130, Asp-132, Asp-134, Gln-136, and Glu-141.

The protein belongs to the calmodulin family.

Calmodulin mediates the control of a large number of enzymes, ion channels and other proteins by Ca(2+). Among the enzymes to be stimulated by the calmodulin-Ca(2+) complex are a number of protein kinases and phosphatases. The sequence is that of Calmodulin-2 (CAM2) from Branchiostoma floridae (Florida lancelet).